Reading from the N-terminus, the 436-residue chain is Prenyltransferase nscD (436 aa).

Belongs to the tryptophan dimethylallyltransferase family.

The protein operates within secondary metabolite biosynthesis. Functionally, prenyltransferase; part of the gene cluster that mediates the biosynthesis of neosartoricin B, a prenylated anthracenone that probably exhibits T-cell antiproliferative activity, suggestive of a physiological role as an immunosuppressive agent. The non-reducing polyketide synthase nscA probably synthesizes and cyclizes the decaketide backbone. The hydrolase nscB then mediates the product release through hydrolysis followed by spontaneous decarboxylation. The prenyltransferase nscD catalyzes the addition of the dimethylallyl group to the aromatic C5. The FAD-dependent monooxygenase nscC is then responsible for the stereospecific hydroxylation at C2. Neosartoricin B can be converted into two additional compounds neosartoricins C and D. Neosartoricin C is a spirocyclic compound that is cyclized through the attack of C3 hydroxyl on C14, followed by dehydration. On the other hand, neosartoricin D is a further cyclized compound in which attack of C2 on C14 in neosartoricin C results in the formation of the acetal-containing dioxabicyclo-octanone ring. Both of these compounds are novel and possibly represent related metabolites of the gene cluster. The polypeptide is Prenyltransferase nscD (Arthroderma benhamiae (strain ATCC MYA-4681 / CBS 112371) (Trichophyton mentagrophytes)).